The sequence spans 399 residues: Elongation factor Tu (399 aa).

The tr-type G domain occupies 10 to 207 (KPHMNVGTIG…AMDTYFPDPV (198 aa)). The tract at residues 19-26 (GQIDHGKT) is G1. A GTP-binding site is contributed by 19–26 (GQIDHGKT). Threonine 26 contributes to the Mg(2+) binding site. Positions 60-64 (GITIN) are G2. A G3 region spans residues 81–84 (DCPG). Residues 81–85 (DCPGH) and 136–139 (NKVD) each bind GTP. Positions 136-139 (NKVD) are G4. The G5 stretch occupies residues 173-175 (SAL).

This sequence belongs to the TRAFAC class translation factor GTPase superfamily. Classic translation factor GTPase family. EF-Tu/EF-1A subfamily. Monomer.

The protein resides in the cytoplasm. It carries out the reaction GTP + H2O = GDP + phosphate + H(+). Its function is as follows. GTP hydrolase that promotes the GTP-dependent binding of aminoacyl-tRNA to the A-site of ribosomes during protein biosynthesis. The sequence is that of Elongation factor Tu from Fervidobacterium islandicum.